The following is a 344-amino-acid chain: tRNA(Ile)-lysidine synthase (344 aa).

30–35 is a binding site for ATP; it reads SGGQDS. The disordered stretch occupies residues 323–344; sequence PPPPAPVPPDPGERSPPPSPLY.

Belongs to the tRNA(Ile)-lysidine synthase family.

It is found in the cytoplasm. The enzyme catalyses cytidine(34) in tRNA(Ile2) + L-lysine + ATP = lysidine(34) in tRNA(Ile2) + AMP + diphosphate + H(+). Ligates lysine onto the cytidine present at position 34 of the AUA codon-specific tRNA(Ile) that contains the anticodon CAU, in an ATP-dependent manner. Cytidine is converted to lysidine, thus changing the amino acid specificity of the tRNA from methionine to isoleucine. This chain is tRNA(Ile)-lysidine synthase, found in Thermosynechococcus vestitus (strain NIES-2133 / IAM M-273 / BP-1).